A 463-amino-acid polypeptide reads, in one-letter code: Type II NADH:quinone oxidoreductase Ndh (463 aa).

FAD-binding positions include 21 to 25 (GSGFG) and Val-89. Residue Glu-184 is part of the active site. Residues Asp-322 and 333 to 334 (AQ) each bind FAD. The helical transmembrane segment at 387-407 (FSGFIAWLIWLVLHLAYLIGF) threads the bilayer.

Belongs to the NADH dehydrogenase family. Requires FAD as cofactor.

It is found in the cell inner membrane. The catalysed reaction is a quinone + NADH + H(+) = a quinol + NAD(+). It catalyses the reaction a menaquinone + NADH + H(+) = a menaquinol + NAD(+). It carries out the reaction a ubiquinone + NADH + H(+) = a ubiquinol + NAD(+). With respect to regulation, inhibited by phenothiazine analogs. Inhibited by 2-mercapto-quinazolinones. Not inhibited by classic inhibitors of type I NADH dehydrogenase, such as rotenone, piericidin A and pyridaben. Functionally, alternative, nonproton pumping NADH:quinone oxidoreductase that delivers electrons to the respiratory chain by oxidation of NADH and reduction of quinones. Ndh is probably the main NADH dehydrogenase of M.tuberculosis. The protein is Type II NADH:quinone oxidoreductase Ndh of Mycobacterium tuberculosis (strain ATCC 25618 / H37Rv).